A 195-amino-acid chain; its full sequence is ATP-dependent Clp protease proteolytic subunit 2 (195 aa).

Serine 98 (nucleophile) is an active-site residue. Histidine 123 is an active-site residue.

Belongs to the peptidase S14 family. As to quaternary structure, fourteen ClpP subunits assemble into 2 heptameric rings which stack back to back to give a disk-like structure with a central cavity, resembling the structure of eukaryotic proteasomes.

Its subcellular location is the cytoplasm. It carries out the reaction Hydrolysis of proteins to small peptides in the presence of ATP and magnesium. alpha-casein is the usual test substrate. In the absence of ATP, only oligopeptides shorter than five residues are hydrolyzed (such as succinyl-Leu-Tyr-|-NHMec, and Leu-Tyr-Leu-|-Tyr-Trp, in which cleavage of the -Tyr-|-Leu- and -Tyr-|-Trp bonds also occurs).. Cleaves peptides in various proteins in a process that requires ATP hydrolysis. Has a chymotrypsin-like activity. Plays a major role in the degradation of misfolded proteins. The polypeptide is ATP-dependent Clp protease proteolytic subunit 2 (Rhodopirellula baltica (strain DSM 10527 / NCIMB 13988 / SH1)).